Consider the following 231-residue polypeptide: MSRSAKPQNGRRRFLRDVVRTAGGLAAVGVALGLQQQTARASGVRLRPPGAINENAFASACVRCGQCVQACPYDTLKLATLASGLSAGTPYFVARDIPCEMCEDIPCAKVCPSGALDREIESIDDARMGLAVLVDQENCLNFQGLRCDVCYRECPKIDEAITLELERNTRTGKHARFLPTVHSDACTGCGKCEKVCVLEQPAIKVLPLSLAKGELGHHYRFGWLEGNNGKS.

The segment at residues 1–41 is a signal peptide (tat-type signal); that stretch reads MSRSAKPQNGRRRFLRDVVRTAGGLAAVGVALGLQQQTARA. 4 consecutive 4Fe-4S ferredoxin-type domains span residues 50-81, 89-121, 130-166, and 177-208; these read GAIN…LATL, TPYF…REIE, LAVL…LELE, and FLPT…VLPL. The [4Fe-4S] cluster site is built by cysteine 61, cysteine 64, cysteine 67, cysteine 71, cysteine 99, cysteine 102, cysteine 107, cysteine 111, cysteine 139, cysteine 147, cysteine 150, cysteine 154, cysteine 186, cysteine 189, cysteine 192, and cysteine 196.

[4Fe-4S] cluster serves as cofactor. In terms of processing, exported by the Tat system. The position of the signal peptide cleavage has not been experimentally proven.

The protein localises to the periplasm. In terms of biological role, required for electron transfer from ubiquinol, via NapC, to the periplasmic nitrate reductase NapAB complex. In Escherichia coli (strain K12), this protein is Ferredoxin-type protein NapG (napG).